We begin with the raw amino-acid sequence, 215 residues long: Rod-determining factor A (215 aa).

Functionally, involved in cell-shape determination. Required for the formation of rods and wild-type-like motility. This is Rod-determining factor A from Haloferax volcanii (strain ATCC 29605 / DSM 3757 / JCM 8879 / NBRC 14742 / NCIMB 2012 / VKM B-1768 / DS2) (Halobacterium volcanii).